We begin with the raw amino-acid sequence, 118 residues long: Iron-sulfur cluster assembly protein CyaY (118 aa).

This sequence belongs to the frataxin family.

Involved in iron-sulfur (Fe-S) cluster assembly. May act as a regulator of Fe-S biogenesis. This chain is Iron-sulfur cluster assembly protein CyaY, found in Buchnera aphidicola subsp. Baizongia pistaciae (strain Bp).